Here is a 259-residue protein sequence, read N- to C-terminus: MSSRKLTLGVSLKMYFGYQQTLDWCQKIHEIAEQHPLASLPSARLFVLPAFPTLAPVVQRFAQSPVHVGAQDLHWTDNGAFTGEVSGTMLHEMGCRYVEIGHAERRRYFGETDEHFALKTAAAWRNGLTPVLCVGEEQRGSTQQAIDTCQAQLAAALNLAQKQQLTGDLVLAYEPQWAIGSTEPAPTAYISEVCQALKQHLPTQAGVREGRIIYGGSAGPGLLSQLGDAVDGLFLGRFAHDPAAFNAIMDEAFTLSSQA.

The active-site Electrophile is the His102. The active-site Proton acceptor is Glu174.

It belongs to the triosephosphate isomerase family.

The enzyme catalyses L-erythrulose 1-phosphate = D-erythrulose 4-phosphate. It functions in the pathway carbohydrate metabolism. Involved in catabolism of D-apiose. Catalyzes the isomerization of L-erythrulose 1-phosphate to D-erythrulose 4-phosphate. In Pectobacterium atrosepticum (strain SCRI 1043 / ATCC BAA-672) (Erwinia carotovora subsp. atroseptica), this protein is L-erythrulose-1-phosphate isomerase.